Reading from the N-terminus, the 385-residue chain is Methionyl-tRNA formyltransferase, mitochondrial (385 aa).

Belongs to the Fmt family.

The protein localises to the mitochondrion. It carries out the reaction L-methionyl-tRNA(fMet) + (6R)-10-formyltetrahydrofolate = N-formyl-L-methionyl-tRNA(fMet) + (6S)-5,6,7,8-tetrahydrofolate + H(+). Its function is as follows. Methionyl-tRNA formyltransferase that formylates methionyl-tRNA in mitochondria and is crucial for translation initiation. The sequence is that of Methionyl-tRNA formyltransferase, mitochondrial (Mtfmt) from Rattus norvegicus (Rat).